The following is a 193-amino-acid chain: MANNRTLARRRRAFSPLTVVMLAVTLVAFMGVPLSSTGAADAADPVESVEANRRGYTSYGEPPVAVGTSEEYVNSSELAGSRDKGNAEAEEEAAEVETDVQPSSVTIDTEERAAPSQVQVQQERMEEADDAPKPVPVRSAVPSTVAKRQQARHRVIGTAVIAAVVAALLWKFSRRRSGAPREGGENENGGEEK.

The N-linked (GlcNAc...) asparagine glycan is linked to asparagine 4. The chain crosses the membrane as a helical span at residues phenylalanine 14–leucine 34. Asparagine 74 carries an N-linked (GlcNAc...) asparagine glycan. Residues serine 75–alanine 140 are disordered. The span at glutamate 88 to threonine 98 shows a compositional bias: acidic residues. A helical transmembrane segment spans residues histidine 153–serine 173. The disordered stretch occupies residues arginine 174–lysine 193.

It belongs to the Gra6 family.

The protein localises to the membrane. The chain is Dense granule protein 2 (DG2) from Neospora caninum (Coccidian parasite).